We begin with the raw amino-acid sequence, 922 residues long: TBC1 domain family member 2A (922 aa).

Residues 1–37 (MEDAPERTPSSSESTQPPGLAREPEVVSPGDSEGCAR) form a disordered region. Residues 1–168 (MEDAPERTPS…AENGPTLHLK (168 aa)) form an interaction with CADH1 region. Residues 8–17 (TPSSSESTQP) show a composition bias toward polar residues. Residues 43–141 (PKKLCGYLSK…WLQQLQMKRW (99 aa)) form the PH domain. The interval 228 to 297 (NKQAQAAAHG…KRQSNTFPFF (70 aa)) is disordered. Residues 262–271 (LPEKEPEDPA) show a composition bias toward basic and acidic residues. Residues 275–295 (PRSSVPSGPTQKPKRQSNTFP) show a composition bias toward polar residues. The segment at 298 to 435 (SDGLARSRTA…QKLTEDLAQP (138 aa)) is interaction with RAC1. Coiled-coil stretches lie at residues 302–333 (ARSR…ELVI), 362–417 (LELV…NHAK), and 443–476 (FLSQ…QVTK). The Rab-GAP TBC domain maps to 619 to 811 (GVPREHRPRV…RVWDAFLYEG (193 aa)). Residues 869 to 904 (MKQLRQLRAAHRERLEAELRELELLKVEYLQRRASL) are a coiled coil. Phosphoserine is present on serine 914.

As to quaternary structure, interacts with activated RAC1 and CDH1.

It is found in the cytoplasm. Its subcellular location is the cytoplasmic vesicle. The protein resides in the cell junction. Acts as a GTPase-activating protein for RAB7A. Signal effector acting as a linker between RAC1 and RAB7A, leading to RAB7A inactivation and subsequent inhibition of cadherin degradation and reduced cell-cell adhesion. In Mus musculus (Mouse), this protein is TBC1 domain family member 2A (Tbc1d2).